The sequence spans 719 residues: Eukaryotic translation initiation factor 3 subunit B (719 aa).

The 88-residue stretch at 60-147 (NILVVDNLPV…HIFAVNMFDD (88 aa)) folds into the RRM domain. WD repeat units follow at residues 167-207 (VPGE…KPEL), 511-553 (LKGK…TMAS), and 555-598 (EHFM…LYRI). A compositionally biased stretch (basic and acidic residues) spans 675-686 (EKMERQKLRDGE). Residues 675-698 (EKMERQKLRDGEASDEEEEYEAKE) are disordered. Acidic residues predominate over residues 687–698 (ASDEEEEYEAKE).

The protein belongs to the eIF-3 subunit B family. Component of the eukaryotic translation initiation factor 3 (eIF-3) complex.

The protein resides in the cytoplasm. RNA-binding component of the eukaryotic translation initiation factor 3 (eIF-3) complex, which is involved in protein synthesis of a specialized repertoire of mRNAs and, together with other initiation factors, stimulates binding of mRNA and methionyl-tRNAi to the 40S ribosome. The eIF-3 complex specifically targets and initiates translation of a subset of mRNAs involved in cell proliferation. The protein is Eukaryotic translation initiation factor 3 subunit B (TIF3B1) of Nicotiana tabacum (Common tobacco).